Reading from the N-terminus, the 140-residue chain is Nucleoside diphosphate kinase (140 aa).

Residues Lys10, Phe58, Arg86, Thr92, Arg103, and Asn113 each contribute to the ATP site. His116 (pros-phosphohistidine intermediate) is an active-site residue.

The protein belongs to the NDK family. Homotetramer. Mg(2+) is required as a cofactor.

It localises to the cytoplasm. The catalysed reaction is a 2'-deoxyribonucleoside 5'-diphosphate + ATP = a 2'-deoxyribonucleoside 5'-triphosphate + ADP. It carries out the reaction a ribonucleoside 5'-diphosphate + ATP = a ribonucleoside 5'-triphosphate + ADP. Major role in the synthesis of nucleoside triphosphates other than ATP. The ATP gamma phosphate is transferred to the NDP beta phosphate via a ping-pong mechanism, using a phosphorylated active-site intermediate. In Haemophilus influenzae (strain PittEE), this protein is Nucleoside diphosphate kinase.